The chain runs to 488 residues: ATP synthase subunit beta (488 aa).

164–171 (GGAGVGKT) is an ATP binding site.

It belongs to the ATPase alpha/beta chains family. F-type ATPases have 2 components, CF(1) - the catalytic core - and CF(0) - the membrane proton channel. CF(1) has five subunits: alpha(3), beta(3), gamma(1), delta(1), epsilon(1). CF(0) has four main subunits: a(1), b(1), b'(1) and c(9-12).

It is found in the cellular thylakoid membrane. It carries out the reaction ATP + H2O + 4 H(+)(in) = ADP + phosphate + 5 H(+)(out). Functionally, produces ATP from ADP in the presence of a proton gradient across the membrane. The catalytic sites are hosted primarily by the beta subunits. This is ATP synthase subunit beta from Prochlorococcus marinus (strain MIT 9211).